The chain runs to 332 residues: tRNA-dihydrouridine(20/20a) synthase (332 aa).

FMN contacts are provided by residues 19–21 and Q71; that span reads PML. C101 functions as the Proton donor in the catalytic mechanism. FMN is bound by residues K140, H173, 213 to 215, and 235 to 236; these read NGG and GR.

This sequence belongs to the Dus family. DusA subfamily. Requires FMN as cofactor.

The enzyme catalyses 5,6-dihydrouridine(20) in tRNA + NADP(+) = uridine(20) in tRNA + NADPH + H(+). It carries out the reaction 5,6-dihydrouridine(20) in tRNA + NAD(+) = uridine(20) in tRNA + NADH + H(+). It catalyses the reaction 5,6-dihydrouridine(20a) in tRNA + NADP(+) = uridine(20a) in tRNA + NADPH + H(+). The catalysed reaction is 5,6-dihydrouridine(20a) in tRNA + NAD(+) = uridine(20a) in tRNA + NADH + H(+). In terms of biological role, catalyzes the synthesis of 5,6-dihydrouridine (D), a modified base found in the D-loop of most tRNAs, via the reduction of the C5-C6 double bond in target uridines. Specifically modifies U20 and U20a in tRNAs. The chain is tRNA-dihydrouridine(20/20a) synthase from Salmonella typhimurium (strain LT2 / SGSC1412 / ATCC 700720).